The chain runs to 59 residues: Large ribosomal subunit protein uL30 (59 aa).

Belongs to the universal ribosomal protein uL30 family. As to quaternary structure, part of the 50S ribosomal subunit.

This Buchnera aphidicola subsp. Acyrthosiphon pisum (strain 5A) protein is Large ribosomal subunit protein uL30.